An 856-amino-acid chain; its full sequence is DNA mismatch repair protein MutS (856 aa).

611–618 is a binding site for ATP; the sequence is GPNMGGKS.

This sequence belongs to the DNA mismatch repair MutS family.

This protein is involved in the repair of mismatches in DNA. It is possible that it carries out the mismatch recognition step. This protein has a weak ATPase activity. This Histophilus somni (strain 129Pt) (Haemophilus somnus) protein is DNA mismatch repair protein MutS.